The primary structure comprises 87 residues: Defensin-like protein 100 (87 aa).

The first 29 residues, 1-29, serve as a signal peptide directing secretion; the sequence is MRSLRLRTVVVATIVVCLSVLLSPTEVDG. 4 disulfide bridges follow: Cys31/Cys79, Cys38/Cys64, Cys44/Cys76, and Cys48/Cys78.

The protein belongs to the DEFL family.

The protein resides in the secreted. This is Defensin-like protein 100 from Arabidopsis thaliana (Mouse-ear cress).